Consider the following 461-residue polypeptide: Methylenetetrahydrofolate--tRNA-(uracil-5-)-methyltransferase TrmFO (461 aa).

16–21 (GAGLAG) lines the FAD pocket.

The protein belongs to the MnmG family. TrmFO subfamily. FAD serves as cofactor.

It localises to the cytoplasm. The enzyme catalyses uridine(54) in tRNA + (6R)-5,10-methylene-5,6,7,8-tetrahydrofolate + NADH + H(+) = 5-methyluridine(54) in tRNA + (6S)-5,6,7,8-tetrahydrofolate + NAD(+). It catalyses the reaction uridine(54) in tRNA + (6R)-5,10-methylene-5,6,7,8-tetrahydrofolate + NADPH + H(+) = 5-methyluridine(54) in tRNA + (6S)-5,6,7,8-tetrahydrofolate + NADP(+). In terms of biological role, catalyzes the folate-dependent formation of 5-methyl-uridine at position 54 (M-5-U54) in all tRNAs. The protein is Methylenetetrahydrofolate--tRNA-(uracil-5-)-methyltransferase TrmFO of Parasynechococcus marenigrum (strain WH8102).